The sequence spans 194 residues: ATP-dependent Clp protease proteolytic subunit 3 (194 aa).

The active-site Nucleophile is Ser96. His121 is a catalytic residue.

Belongs to the peptidase S14 family. In terms of assembly, fourteen ClpP subunits assemble into 2 heptameric rings which stack back to back to give a disk-like structure with a central cavity, resembling the structure of eukaryotic proteasomes.

Its subcellular location is the cytoplasm. The catalysed reaction is Hydrolysis of proteins to small peptides in the presence of ATP and magnesium. alpha-casein is the usual test substrate. In the absence of ATP, only oligopeptides shorter than five residues are hydrolyzed (such as succinyl-Leu-Tyr-|-NHMec, and Leu-Tyr-Leu-|-Tyr-Trp, in which cleavage of the -Tyr-|-Leu- and -Tyr-|-Trp bonds also occurs).. Functionally, cleaves peptides in various proteins in a process that requires ATP hydrolysis. Has a chymotrypsin-like activity. Plays a major role in the degradation of misfolded proteins. This Prochlorococcus marinus (strain NATL2A) protein is ATP-dependent Clp protease proteolytic subunit 3.